The chain runs to 115 residues: Glycine cleavage system H-like protein (115 aa).

One can recognise a Lipoyl-binding domain in the interval 17-99 (VVRLGLTEKM…EGEGWLAVVR (83 aa)). Residue Lys-58 is modified to N6-lipoyllysine.

Belongs to the GcvH family. (R)-lipoate is required as a cofactor.

The sequence is that of Glycine cleavage system H-like protein from Chlamydia pneumoniae (Chlamydophila pneumoniae).